Consider the following 462-residue polypeptide: MSTGGPQKLEAQGGKEGKEWDDGAEHDGVTKIYVAAGGLGIEQIRFDYVKNGQPKEGSFHGVKGRSTISTIEISHPAEYLISMEGWYDSTNIIQGIQFKSNKHTSQYFGYEFFGDGTQFSLQVNDNKIIGFHGFADSHLNSVGAYFAPISSSLTTTPNKVEAQGGNGGETFDDGVFDHVRKVYVGQGESGVAYVKFEYEKDGKRETRDHGKMTLLGTEEFEVDSDDYITSIEVSVDKVFGYNSEIVTALVFKTSKGTTSPPFGMVTEKKFELKDGNGGKLAGFHGKASDVLYALGAYFAPSTTSTTPSTTKKLQARGGNGGASWDDGVFDGVRKILVGQGNDGVAFVTFEYNKGSQAILGDGHGKKTLLGTETFELDYPSEYITSVEGYYDKIFGVEAEVVTSLTFKTNKRTSQPFGMTAGEHFELKEDGYKVVGFHGKAGDLVHQIGVHIVPIFTNYRVAI.

The interval 1–23 (MSTGGPQKLEAQGGKEGKEWDDG) is disordered. Jacalin-type lectin domains follow at residues 6 to 148 (PQKL…YFAP), 157 to 300 (PNKV…YFAP), and 310 to 453 (TKKL…HIVP). Basic and acidic residues predominate over residues 13–23 (GGKEGKEWDDG).

Belongs to the jacalin lectin family. In terms of tissue distribution, expressed exclusively in flowers, in male and female organs, petals and pedicels. Not detected in pollen grains or sepals.

The protein is Myrosinase-binding protein 1 (MBP1) of Arabidopsis thaliana (Mouse-ear cress).